A 199-amino-acid polypeptide reads, in one-letter code: Desiccation stress protein DSP-22, chloroplastic (199 aa).

The transit peptide at 1 to 52 (MASSTCYATIPAMSCRGQSTITRFGPNNLFLGKQSYELPLMRRNAKFTVRSM) directs the protein to the chloroplast. Over residues 53 to 62 (REDNEKEEQQ) the composition is skewed to basic and acidic residues. Residues 53-82 (REDNEKEEQQQQKQQQTHDGGPDLTPNRTE) are disordered. 2 helical membrane passes run 130–152 (FNGGVMWFLLTSAVLVLATLIPI) and 172–191 (IWNGRFAMIGLVALAFTEYV).

Belongs to the ELIP/psbS family. Preferentially localized in the chloroplast-rich palisade parenchyma cells, in extracts of desiccated leaves, in seeds, but not in roots or untreated leaves.

It is found in the plastid. The protein resides in the chloroplast thylakoid membrane. Its function is as follows. Possibly exerts a protective role during water loss. In Craterostigma plantagineum (Blue gem), this protein is Desiccation stress protein DSP-22, chloroplastic (DSP-22).